The chain runs to 99 residues: Large ribosomal subunit protein uL23 (99 aa).

The protein belongs to the universal ribosomal protein uL23 family. In terms of assembly, part of the 50S ribosomal subunit. Contacts protein L29, and trigger factor when it is bound to the ribosome.

Its function is as follows. One of the early assembly proteins it binds 23S rRNA. One of the proteins that surrounds the polypeptide exit tunnel on the outside of the ribosome. Forms the main docking site for trigger factor binding to the ribosome. The protein is Large ribosomal subunit protein uL23 of Alkalilimnicola ehrlichii (strain ATCC BAA-1101 / DSM 17681 / MLHE-1).